The following is a 278-amino-acid chain: Shikimate dehydrogenase (NADP(+)) (278 aa).

Residues 19–21 and Thr66 contribute to the shikimate site; that span reads SLS. Catalysis depends on Lys70, which acts as the Proton acceptor. Asp82 provides a ligand contact to NADP(+). Positions 91 and 107 each coordinate shikimate. NADP(+) contacts are provided by residues 133-137, 157-162, and Ile222; these read GSGGA and NRTRAR. Residue Tyr224 participates in shikimate binding. Residue Gly245 participates in NADP(+) binding.

This sequence belongs to the shikimate dehydrogenase family. Homodimer.

The enzyme catalyses shikimate + NADP(+) = 3-dehydroshikimate + NADPH + H(+). It functions in the pathway metabolic intermediate biosynthesis; chorismate biosynthesis; chorismate from D-erythrose 4-phosphate and phosphoenolpyruvate: step 4/7. Its function is as follows. Involved in the biosynthesis of the chorismate, which leads to the biosynthesis of aromatic amino acids. Catalyzes the reversible NADPH linked reduction of 3-dehydroshikimate (DHSA) to yield shikimate (SA). In Jannaschia sp. (strain CCS1), this protein is Shikimate dehydrogenase (NADP(+)).